Reading from the N-terminus, the 343-residue chain is Cytosolic Fe-S cluster assembly factor CFD1 (343 aa).

Residue 15–22 (GKGGVGKS) participates in ATP binding. 2 stretches are compositionally biased toward polar residues: residues 80-91 (PSSDGLNGSQRA) and 99-110 (ESSSSTVETAPQ). Positions 80 to 110 (PSSDGLNGSQRANKPDDSNESSSSTVETAPQ) are disordered. [4Fe-4S] cluster is bound by residues Cys-241 and Cys-244.

Belongs to the Mrp/NBP35 ATP-binding proteins family. NUBP2/CFD1 subfamily. As to quaternary structure, heterotetramer of 2 NBP35 and 2 CFD1 chains. Requires [4Fe-4S] cluster as cofactor.

It is found in the cytoplasm. Its function is as follows. Component of the cytosolic iron-sulfur (Fe/S) protein assembly (CIA) machinery. Required for maturation of extramitochondrial Fe-S proteins. The NBP35-CFD1 heterotetramer forms a Fe-S scaffold complex, mediating the de novo assembly of an Fe-S cluster and its transfer to target apoproteins. The chain is Cytosolic Fe-S cluster assembly factor CFD1 from Coccidioides immitis (strain RS) (Valley fever fungus).